A 190-amino-acid polypeptide reads, in one-letter code: Protein A52 (190 aa).

Belongs to the orthopoxvirus A52R protein family. As to quaternary structure, interacts with host TRAF6 and IRAK2.

Its function is as follows. Bcl-2-like protein which targets host toll-like receptor signaling complexes to suppress innate immune response. Interacts with host TRAF6 to activate p38 and subsequently induce the expression of several cytokines such as IL-10. Also associates with host IRAK2 to inhibit NF-kappa-B signaling. The sequence is that of Protein A52 from Homo sapiens (Human).